The primary structure comprises 228 residues: Potassium/proton antiporter CemA (228 aa).

The next 3 membrane-spanning stretches (helical) occupy residues 6 to 26 (FIPLLYLTSIVFLPWWVSFSF), 113 to 133 (IICFVILSGYSFLVNEELFIL), and 188 to 208 (IISGLVSTFPVIFDTIFKYWI).

It belongs to the CemA family.

The protein localises to the plastid. It is found in the chloroplast inner membrane. The catalysed reaction is K(+)(in) + H(+)(out) = K(+)(out) + H(+)(in). Contributes to K(+)/H(+) antiport activity by supporting proton efflux to control proton extrusion and homeostasis in chloroplasts in a light-dependent manner to modulate photosynthesis. Prevents excessive induction of non-photochemical quenching (NPQ) under continuous-light conditions. Indirectly promotes efficient inorganic carbon uptake into chloroplasts. The sequence is that of Potassium/proton antiporter CemA from Populus alba (White poplar).